Reading from the N-terminus, the 98-residue chain is NADH-ubiquinone oxidoreductase chain 4L (98 aa).

The next 3 membrane-spanning stretches (helical) occupy residues 1-21 (MSLVHINVLIAFTVSLTGLLM), 29-49 (ALLCLEGMVLSLFILAALTIL), and 61-81 (IILLVFAACEAAIGLALLVMV).

This sequence belongs to the complex I subunit 4L family. As to quaternary structure, core subunit of respiratory chain NADH dehydrogenase (Complex I) which is composed of 45 different subunits.

It is found in the mitochondrion inner membrane. The catalysed reaction is a ubiquinone + NADH + 5 H(+)(in) = a ubiquinol + NAD(+) + 4 H(+)(out). Core subunit of the mitochondrial membrane respiratory chain NADH dehydrogenase (Complex I) which catalyzes electron transfer from NADH through the respiratory chain, using ubiquinone as an electron acceptor. Part of the enzyme membrane arm which is embedded in the lipid bilayer and involved in proton translocation. The protein is NADH-ubiquinone oxidoreductase chain 4L (MT-ND4L) of Lagenorhynchus albirostris (White-beaked dolphin).